The chain runs to 329 residues: Calponin-3 (329 aa).

An N6-acetyllysine modification is found at Lys23. Positions 26 to 130 (HQAEEDLRNW…TLVALAGLAK (105 aa)) constitute a Calponin-homology (CH) domain. N6-methyllysine is present on Lys158. Calponin-like repeat units follow at residues 164-189 (IGLQ…RHLY), 204-229 (ISLQ…RDIY), and 243-268 (ISLQ…RQVY). The interval 279–329 (PVIHNGSQGTGTNGSEISDSDYQAEYPDEYHGEYQDDYPRDYQYSDQGIDY) is disordered. Residues 306–318 (DEYHGEYQDDYPR) show a composition bias toward basic and acidic residues. Ser323 carries the phosphoserine modification.

Belongs to the calponin family. Expressed in both non-smooth muscle tissues as well as smooth muscle tissues.

In terms of biological role, thin filament-associated protein that is implicated in the regulation and modulation of smooth muscle contraction. It is capable of binding to actin, calmodulin and tropomyosin. The interaction of calponin with actin inhibits the actomyosin Mg-ATPase activity. In Homo sapiens (Human), this protein is Calponin-3 (CNN3).